A 199-amino-acid chain; its full sequence is Inosine triphosphate pyrophosphatase (199 aa).

ITP is bound at residue 12–17 (TGNAKK). Glutamate 42 contributes to the Mg(2+) binding site. Residues lysine 54, 70 to 71 (DT), lysine 87, 146 to 149 (FGWD), lysine 169, and 174 to 175 (HR) contribute to the ITP site.

This sequence belongs to the HAM1 NTPase family. Homodimer. The cofactor is Mg(2+). Mn(2+) serves as cofactor.

It is found in the cytoplasm. It carries out the reaction ITP + H2O = IMP + diphosphate + H(+). The catalysed reaction is dITP + H2O = dIMP + diphosphate + H(+). The enzyme catalyses XTP + H2O = XMP + diphosphate + H(+). Functionally, pyrophosphatase that hydrolyzes non-canonical purine nucleotides such as inosine triphosphate (ITP), deoxyinosine triphosphate (dITP) or xanthosine 5'-triphosphate (XTP) to their respective monophosphate derivatives. The enzyme does not distinguish between the deoxy- and ribose forms. Probably excludes non-canonical purines from RNA and DNA precursor pools, thus preventing their incorporation into RNA and DNA and avoiding chromosomal lesions. The chain is Inosine triphosphate pyrophosphatase from Monosiga brevicollis (Choanoflagellate).